The chain runs to 529 residues: Bifunctional purine biosynthesis protein PurH (529 aa).

In terms of domain architecture, MGS-like spans 1–148; it reads MQQRRPVRRA…KNHKDVAIVV (148 aa).

The protein belongs to the PurH family.

The enzyme catalyses (6R)-10-formyltetrahydrofolate + 5-amino-1-(5-phospho-beta-D-ribosyl)imidazole-4-carboxamide = 5-formamido-1-(5-phospho-D-ribosyl)imidazole-4-carboxamide + (6S)-5,6,7,8-tetrahydrofolate. It carries out the reaction IMP + H2O = 5-formamido-1-(5-phospho-D-ribosyl)imidazole-4-carboxamide. It participates in purine metabolism; IMP biosynthesis via de novo pathway; 5-formamido-1-(5-phospho-D-ribosyl)imidazole-4-carboxamide from 5-amino-1-(5-phospho-D-ribosyl)imidazole-4-carboxamide (10-formyl THF route): step 1/1. Its pathway is purine metabolism; IMP biosynthesis via de novo pathway; IMP from 5-formamido-1-(5-phospho-D-ribosyl)imidazole-4-carboxamide: step 1/1. This Salmonella dublin (strain CT_02021853) protein is Bifunctional purine biosynthesis protein PurH.